The sequence spans 103 residues: N(4)-acetylcytidine amidohydrolase (103 aa).

The region spanning 6–101 (ITFFQRFQDD…QTQFYVIEFK (96 aa)) is the ASCH domain. Residue K21 is the Proton acceptor of the active site. The active-site Nucleophile is T24. E74 serves as the catalytic Proton donor.

It belongs to the N(4)-acetylcytidine amidohydrolase family.

It catalyses the reaction N(4)-acetylcytidine + H2O = cytidine + acetate + H(+). The enzyme catalyses N(4)-acetyl-2'-deoxycytidine + H2O = 2'-deoxycytidine + acetate + H(+). The catalysed reaction is N(4)-acetylcytosine + H2O = cytosine + acetate + H(+). In terms of biological role, catalyzes the hydrolysis of N(4)-acetylcytidine (ac4C). The sequence is that of N(4)-acetylcytidine amidohydrolase (yqfB) from Escherichia coli (strain SE11).